A 562-amino-acid polypeptide reads, in one-letter code: Cell division protein FtsZ (562 aa).

GTP contacts are provided by residues 23-27 (GAGGN), 110-112 (GTG), glutamate 141, arginine 145, and aspartate 189. Over residues 404–413 (PAAARPAQQP) the composition is skewed to low complexity. Disordered regions lie at residues 404-428 (PAAARPAQQPMAETFRPDPQLRLDP) and 462-562 (ETAQ…RQAN). Positions 418-428 (FRPDPQLRLDP) are enriched in basic and acidic residues. Composition is skewed to low complexity over residues 464-486 (AQAAPQPQRQPEIQRQQAPQPQR) and 500-510 (GLLRRPAAAQP).

The protein belongs to the FtsZ family. As to quaternary structure, homodimer. Polymerizes to form a dynamic ring structure in a strictly GTP-dependent manner. Interacts directly with several other division proteins. Interacts with FtsZ-like protein (also called FtsZm).

It localises to the cytoplasm. Functionally, essential cell division protein that forms a contractile ring structure (Z ring) at the future cell division site. The regulation of the ring assembly controls the timing and the location of cell division. One of the functions of the FtsZ ring is to recruit other cell division proteins to the septum to produce a new cell wall between the dividing cells. Binds GTP and shows GTPase activity. Mild overexpression impairs cell division, leading to very elongated cells. Isolated protein forms filaments and bundles in the presence of GTP. This chain is Cell division protein FtsZ, found in Magnetospirillum gryphiswaldense (strain DSM 6361 / JCM 21280 / NBRC 15271 / MSR-1).